We begin with the raw amino-acid sequence, 188 residues long: Capsid protein (188 aa).

Belongs to the tymoviruses capsid protein family.

The protein localises to the virion. In terms of biological role, self-assembles to form a T=3 icosahedral capsid composed of 180 copies of the capsid protein. The capsid encapsulates the single-stranded RNA genome. The chain is Capsid protein from Physalis heterophylla (PhMV).